Reading from the N-terminus, the 389-residue chain is Na(+)/H(+) antiporter NhaA (389 aa).

11 helical membrane passes run 17–37, 59–79, 95–115, 124–144, 154–174, 177–197, 213–233, 261–281, 292–312, 328–348, and 363–383; these read ILLL…LAGF, LLLW…GLEV, SLPT…YLLF, AGWA…MALL, VFLL…IALF, SDLS…LVAL, LILW…GVII, FLIL…NMSL, IALG…FVAV, IAPV…IASL, and LGTL…LSKV.

This sequence belongs to the NhaA Na(+)/H(+) (TC 2.A.33) antiporter family.

The protein localises to the cell inner membrane. It carries out the reaction Na(+)(in) + 2 H(+)(out) = Na(+)(out) + 2 H(+)(in). Na(+)/H(+) antiporter that extrudes sodium in exchange for external protons. The chain is Na(+)/H(+) antiporter NhaA from Shewanella oneidensis (strain ATCC 700550 / JCM 31522 / CIP 106686 / LMG 19005 / NCIMB 14063 / MR-1).